The sequence spans 1231 residues: uncharacterized protein (1231 aa).

Disordered regions lie at residues 171 to 197 (LKPD…QHDD), 210 to 259 (DESF…HLPT), and 389 to 547 (ASPR…RSSR). The segment covering 440 to 450 (RSRHSHKRRSI) has biased composition (basic residues). Phosphoserine is present on residues S449, S451, S453, and S455. Positions 458–502 (RGGRRAVRRSRSRSPRRSYNRGSTRSRSRSMRHRSRSPAHYRGRG) are enriched in basic residues. Residues 503–541 (RGREPASKERGSSSRDFGGRHSLQRERERSSEYYHRNEG) show a composition bias toward basic and acidic residues. Y549 is subject to Phosphotyrosine. Disordered regions lie at residues 570-591 (KTSS…ASEP), 950-981 (PNLD…DDEE), and 1058-1203 (TLSK…PPFN). S573 and S589 each carry phosphoserine. At T970 the chain carries Phosphothreonine. A Phosphoserine modification is found at S972. Positions 1076–1103 (YMMNQQHGAPNAQNAPNLGQNPGQNLGQ) are enriched in polar residues. Residues 1118–1127 (QQQQQQQQQQ) show a composition bias toward low complexity. Over residues 1178–1203 (PPGPGGYVGPPPNPWASNVPPQPPFN) the composition is skewed to pro residues.

This is an uncharacterized protein from Drosophila melanogaster (Fruit fly).